We begin with the raw amino-acid sequence, 494 residues long: Ankyrin repeat domain-containing protein 33B (494 aa).

Residues 1 to 80 (MVLLAGTGPE…SAESVPEGVP (80 aa)) form a disordered region. Acidic residues predominate over residues 30–42 (VEEDPADYEEFED). ANK repeat units lie at residues 84–113 (PETA…SVEE), 120–150 (NGRT…DVNW), 154–183 (EGNT…GLDL), 189–218 (FGFT…DVHA), and 223–255 (RGMS…PEQF). The segment at 349–494 (RAARGPQAQE…RRTAPWKKRT (146 aa)) is disordered. Over residues 371 to 382 (TGQEDADSREGS) the composition is skewed to basic and acidic residues. Position 405 is a phosphoserine (Ser405). Composition is skewed to basic and acidic residues over residues 440–451 (RPARKGSTKDSG) and 459–487 (RYKE…ERRT). Positions 459 to 488 (RYKEAKEEKRKAEEAEKKRQAEAQKERRTA) form a coiled coil.

The chain is Ankyrin repeat domain-containing protein 33B (ANKRD33B) from Homo sapiens (Human).